A 259-amino-acid polypeptide reads, in one-letter code: Dysbindin domain-containing protein 2 (259 aa).

2 disordered regions span residues 27 to 56 (SCER…PVSR) and 174 to 259 (ADVF…GACS). Pro residues predominate over residues 32–46 (SPPPPLPHFRLPPLP). Positions 205-223 (TSDRTTSRTSSSSSSDSST) are enriched in low complexity. 2 positions are modified to phosphoserine: serine 217 and serine 218. Residue threonine 237 is modified to Phosphothreonine. Serine 242 is subject to Phosphoserine.

The protein belongs to the dysbindin family. In terms of assembly, monomer. Interacts with CSNK1D and CSNK1E. As to expression, detected in brain.

Its function is as follows. May modulate the activity of casein kinase-1. Inhibits CSNK1D autophosphorylation (in vitro). The protein is Dysbindin domain-containing protein 2 (DBNDD2) of Homo sapiens (Human).